We begin with the raw amino-acid sequence, 349 residues long: Small ribosomal subunit biogenesis GTPase RsgA (349 aa).

The span at 1-11 (MSKKKLSKGQQ) shows a compositional bias: basic residues. The interval 1-29 (MSKKKLSKGQQRRVSANHQRRLKKTESKV) is disordered. The 171-residue stretch at 102-272 (HSVLTRPDYY…VIDSPGVREF (171 aa)) folds into the CP-type G domain. GTP contacts are provided by residues 158 to 161 (NKID) and 212 to 220 (GQSGVGKSS). Zn(2+) contacts are provided by cysteine 296, cysteine 301, histidine 303, and cysteine 309.

Belongs to the TRAFAC class YlqF/YawG GTPase family. RsgA subfamily. Monomer. Associates with 30S ribosomal subunit, binds 16S rRNA. Zn(2+) is required as a cofactor.

It is found in the cytoplasm. One of several proteins that assist in the late maturation steps of the functional core of the 30S ribosomal subunit. Helps release RbfA from mature subunits. May play a role in the assembly of ribosomal proteins into the subunit. Circularly permuted GTPase that catalyzes slow GTP hydrolysis, GTPase activity is stimulated by the 30S ribosomal subunit. The protein is Small ribosomal subunit biogenesis GTPase RsgA of Pectobacterium atrosepticum (strain SCRI 1043 / ATCC BAA-672) (Erwinia carotovora subsp. atroseptica).